A 245-amino-acid chain; its full sequence is Ribonuclease P protein component 3 (245 aa).

It belongs to the eukaryotic/archaeal RNase P protein component 3 family. In terms of assembly, consists of a catalytic RNA component and at least 4-5 protein subunits.

The protein resides in the cytoplasm. It catalyses the reaction Endonucleolytic cleavage of RNA, removing 5'-extranucleotides from tRNA precursor.. In terms of biological role, part of ribonuclease P, a protein complex that generates mature tRNA molecules by cleaving their 5'-ends. The polypeptide is Ribonuclease P protein component 3 (Methanothermobacter thermautotrophicus (strain ATCC 29096 / DSM 1053 / JCM 10044 / NBRC 100330 / Delta H) (Methanobacterium thermoautotrophicum)).